The chain runs to 378 residues: Erythronate-4-phosphate dehydrogenase (378 aa).

Substrate-binding residues include serine 45 and threonine 66. 2 residues coordinate NAD(+): aspartate 146 and threonine 175. The active site involves arginine 208. Residue aspartate 232 participates in NAD(+) binding. Glutamate 237 is a catalytic residue. Histidine 254 acts as the Proton donor in catalysis. Glycine 257 lines the NAD(+) pocket. Substrate is bound at residue tyrosine 258.

Belongs to the D-isomer specific 2-hydroxyacid dehydrogenase family. PdxB subfamily. In terms of assembly, homodimer.

The protein resides in the cytoplasm. The catalysed reaction is 4-phospho-D-erythronate + NAD(+) = (R)-3-hydroxy-2-oxo-4-phosphooxybutanoate + NADH + H(+). The protein operates within cofactor biosynthesis; pyridoxine 5'-phosphate biosynthesis; pyridoxine 5'-phosphate from D-erythrose 4-phosphate: step 2/5. In terms of biological role, catalyzes the oxidation of erythronate-4-phosphate to 3-hydroxy-2-oxo-4-phosphonooxybutanoate. This is Erythronate-4-phosphate dehydrogenase from Citrobacter koseri (strain ATCC BAA-895 / CDC 4225-83 / SGSC4696).